A 224-amino-acid chain; its full sequence is Non-structural protein V (224 aa).

The span at 54-65 (QKNIQHPTASHQ) shows a compositional bias: polar residues. 2 disordered regions span residues 54–96 (QKNI…DPEP) and 150–171 (TEFK…GGHR). Zn(2+) contacts are provided by His-170, Cys-189, Cys-193, Cys-205, Cys-207, Cys-210, Cys-214, and Cys-217.

The protein belongs to the paramyxoviruses V protein family. As to quaternary structure, interacts with host IFIH1/MDA5 and DHX58/LGP2. Forms with host DDB1, CUL4A, STAT1, STAT2 and STAT3 the mumps virus V-dependent complex (VDC).

It is found in the virion. The protein resides in the host cytoplasm. Its function is as follows. Plays an essential role in the inhibition of host immune response. Prevents the establishment of cellular antiviral state by blocking interferon-alpha/beta (IFN-alpha/beta) production and signaling pathway. Interacts with host IFIH1/MDA5 and DHX58/LGP2 to inhibit the transduction pathway involved in the activation of IFN-beta promoter, thus protecting the virus against cell antiviral state. Blocks the type I and II interferon signaling pathways by interacting with host STAT1, STAT2 and STAT3, and mediating their ubiquitination and subsequent proteasomal degradation. This Mumps virus (strain SBL) (MuV) protein is Non-structural protein V.